The primary structure comprises 680 residues: MPSVSKAAAAALSGSPPQTEKPTHYRYLKEFRTEQCPLFSQHKCAQHRPFTCFHWHFLNQRRRRPLRRRDGTFNYSPDVYCSKYNEATGVCPDGDECPYLHRTTGDTERKYHLRYYKTGTCIHETDARGHCVKNGLHCAFAHGPLDLRPPVCDVRELQAQEALQNGQLGGGEGVPDLQPGVLASQAMIEKILSEDPRWQDANFVLGSYKTEQCPKPPRLCRQGYACPHYHNSRDRRRNPRRFQYRSTPCPSVKHGDEWGEPSRCDGGDGCQYCHSRTEQQFHPESTKCNDMRQTGYCPRGPFCAFAHVEKSLGMVNEWGCHDLHLTSPSSTGSGQPGNAKRRDSPAEGGPRGSEQDSKQNHLAVFAAVHPPAPSVSSSVASSLASSAGSGSSSPTALPAPPARALPLGPASSTVEAVLGSALDLHLSNVNIASLEKDLEEQDGHDLGAAGPRSLAGSAPVAIPGSLPRAPSLHSPSSASTSPLGSLSQPLPGPVGSSAMTPPQQPPPLRSEPGTLGSAASSYSPLGLNGVPGSIWDFVSGSFSPSPSPILSAGPPSSSSASPNGAELARVRRQLDEAKRKIRQWEESWQQVKQVCDAWQREAQEAKERARVADSDRQLALQKKEEVEAQVIFQLRAKQCVACRERAHGAVLRPCQHHILCEPCAATAPECPYCKGQPLQW.

The interval 1–22 is disordered; it reads MPSVSKAAAAALSGSPPQTEKP. C3H1-type zinc fingers lie at residues 75 to 104, 115 to 145, 243 to 277, and 283 to 310; these read YSPD…HRTT, YYKT…HGPL, QYRS…HSRT, and PEST…HVEK. 4 stretches are compositionally biased toward low complexity: residues 326–337, 375–396, 465–497, and 545–562; these read TSPSSTGSGQPG, VSSS…SPTA, SLPR…VGSS, and SPSP…SASP. 4 disordered regions span residues 326-358, 375-400, 442-520, and 545-566; these read TSPS…QDSK, VSSS…LPAP, DGHD…SAAS, and SPSP…NGAE. A coiled-coil region spans residues 563-619; it reads NGAELARVRRQLDEAKRKIRQWEESWQQVKQVCDAWQREAQEAKERARVADSDRQLA. An RING-type zinc finger spans residues 639–674; it reads CVACRERAHGAVLRPCQHHILCEPCAATAPECPYCK.

The protein belongs to the unkempt family. As to quaternary structure, isoform 4 (C-terminal) interacts with the GTP-bound form of RAC1. Isoform 4 (C-terminal) interacts with SMARCD2/BAF60b. Isoform 4 is ubiquitinated in the C-terminal. Ubiquitination is enhanced by activated RAC1. The presence of the RING finger domain is not essential for ubiquitination to occur.

It is found in the cytoplasm. The protein resides in the nucleus. It functions in the pathway protein modification; protein ubiquitination. Functionally, may participate in a protein complex showing an E3 ligase activity regulated by RAC1. Ubiquitination is directed towards itself and possibly other substrates, such as SMARCD2/BAF60b. Intrinsic E3 ligase activity has not been proven. This is Putative E3 ubiquitin-protein ligase UNKL (UNKL) from Homo sapiens (Human).